The following is a 118-amino-acid chain: Large ribosomal subunit protein uL18 (118 aa).

The protein belongs to the universal ribosomal protein uL18 family. As to quaternary structure, part of the 50S ribosomal subunit; part of the 5S rRNA/L5/L18/L25 subcomplex. Contacts the 5S and 23S rRNAs.

Functionally, this is one of the proteins that bind and probably mediate the attachment of the 5S RNA into the large ribosomal subunit, where it forms part of the central protuberance. This is Large ribosomal subunit protein uL18 from Parvibaculum lavamentivorans (strain DS-1 / DSM 13023 / NCIMB 13966).